A 61-amino-acid polypeptide reads, in one-letter code: Large ribosomal subunit protein bL32 (61 aa).

Residues 1–16 (MAVPKRKTSPSKRGMR) show a composition bias toward basic residues. The segment at 1–61 (MAVPKRKTSP…RQVLTPKESA (61 aa)) is disordered. Residues 28–44 (VEDKNSGELRRPHHIDL) show a composition bias toward basic and acidic residues.

Belongs to the bacterial ribosomal protein bL32 family.

This Rhizobium etli (strain CIAT 652) protein is Large ribosomal subunit protein bL32.